A 296-amino-acid polypeptide reads, in one-letter code: Cell division protein DivIB (296 aa).

The Cytoplasmic segment spans residues 1 to 29 (MTKEIPKINNEYLKEKRKKQRIQQRRVQR). A helical transmembrane segment spans residues 30–50 (MIVGILVVIVLLILVYMFTPI). A POTRA domain is found at 51–119 (SHIKSADIKG…NPIEVNVKEH (69 aa)). The Extracellular portion of the chain corresponds to 51–296 (SHIKSADIKG…NKIKDEESSE (246 aa)). A compositionally biased stretch (polar residues) spans 256–273 (NNGQTSSASAKEVQSGTA). The tract at residues 256 to 296 (NNGQTSSASAKEVQSGTASEDKAKDDLQKALNKIKDEESSE) is disordered. Residues 274–296 (SEDKAKDDLQKALNKIKDEESSE) show a composition bias toward basic and acidic residues.

It belongs to the FtsQ/DivIB family. DivIB subfamily.

Its subcellular location is the cell membrane. Functionally, cell division protein that may be involved in stabilizing or promoting the assembly of the division complex. The sequence is that of Cell division protein DivIB from Staphylococcus pseudintermedius (strain HKU10-03).